The sequence spans 296 residues: Light-independent protochlorophyllide reductase iron-sulfur ATP-binding protein (296 aa).

Residues 39–44 (GIGKST) and lysine 68 each bind ATP. Mg(2+) is bound at residue serine 43. [4Fe-4S] cluster is bound by residues cysteine 124 and cysteine 158. 209 to 210 (NR) serves as a coordination point for ATP.

This sequence belongs to the NifH/BchL/ChlL family. In terms of assembly, homodimer. Protochlorophyllide reductase is composed of three subunits; ChlL, ChlN and ChlB. [4Fe-4S] cluster serves as cofactor.

The catalysed reaction is chlorophyllide a + oxidized 2[4Fe-4S]-[ferredoxin] + 2 ADP + 2 phosphate = protochlorophyllide a + reduced 2[4Fe-4S]-[ferredoxin] + 2 ATP + 2 H2O. The protein operates within porphyrin-containing compound metabolism; chlorophyll biosynthesis (light-independent). In terms of biological role, component of the dark-operative protochlorophyllide reductase (DPOR) that uses Mg-ATP and reduced ferredoxin to reduce ring D of protochlorophyllide (Pchlide) to form chlorophyllide a (Chlide). This reaction is light-independent. The L component serves as a unique electron donor to the NB-component of the complex, and binds Mg-ATP. The polypeptide is Light-independent protochlorophyllide reductase iron-sulfur ATP-binding protein (Synechococcus sp. (strain CC9605)).